The chain runs to 752 residues: BCLAF1 and THRAP3 family member 3 (752 aa).

A compositionally biased stretch (basic residues) spans 1–13 (MARSRSRSPRWKQ). Disordered regions lie at residues 1-114 (MARS…YMPT), 132-177 (PTVQ…QMSL), and 190-252 (DELR…DPAR). Phosphoserine is present on residues Ser-15 and Ser-17. Positions 23–57 (FEYHEERHFHGHYDPEYRHDQQRPFTWRMDDEKHG) are enriched in basic and acidic residues. Ser-78 and Ser-80 each carry phosphoserine. Residues 85-109 (PVEKFDTYKPHQEYFPGRGDDDRRS) are compositionally biased toward basic and acidic residues. The segment covering 190–199 (DELRHQRVQE) has biased composition (basic and acidic residues). Position 205 is a phosphoserine (Ser-205). 2 stretches are compositionally biased toward basic and acidic residues: residues 222 to 231 (RYPEDHDFRK) and 238 to 252 (RPTD…DPAR). A Glycyl lysine isopeptide (Lys-Gly) (interchain with G-Cter in SUMO2) cross-link involves residue Lys-416. Ser-592 is subject to Phosphoserine.

Belongs to the BCLAF1/THRAP3 family.

It localises to the mitochondrion. This chain is BCLAF1 and THRAP3 family member 3, found in Mus musculus (Mouse).